Consider the following 484-residue polypeptide: Chromosomal replication initiator protein DnaA (484 aa).

Positions 1–73 (MQEGKNIWSL…EILIEKGHST (73 aa)) are domain I, interacts with DnaA modulators. Residues 73–140 (TINVEFIHSQ…EEIHIKYRNP (68 aa)) form a domain II region. Residues 141–357 (FLKKKYTFEN…AAVTKLKAHI (217 aa)) form a domain III, AAA+ region region. The ATP site is built by G185, G187, K188, and T189. The tract at residues 358–484 (DLEDIEIDTN…IELMNKINKN (127 aa)) is domain IV, binds dsDNA.

This sequence belongs to the DnaA family. In terms of assembly, oligomerizes as a right-handed, spiral filament on DNA at oriC.

It localises to the cytoplasm. In terms of biological role, plays an essential role in the initiation and regulation of chromosomal replication. ATP-DnaA binds to the origin of replication (oriC) to initiate formation of the DNA replication initiation complex once per cell cycle. Binds the DnaA box (a 9 base pair repeat at the origin) and separates the double-stranded (ds)DNA. Forms a right-handed helical filament on oriC DNA; dsDNA binds to the exterior of the filament while single-stranded (ss)DNA is stabiized in the filament's interior. The ATP-DnaA-oriC complex binds and stabilizes one strand of the AT-rich DNA unwinding element (DUE), permitting loading of DNA polymerase. After initiation quickly degrades to an ADP-DnaA complex that is not apt for DNA replication. Binds acidic phospholipids. The protein is Chromosomal replication initiator protein DnaA of Borrelia duttonii (strain Ly).